Reading from the N-terminus, the 330-residue chain is Uracil-DNA glycosylase, mitochondrial (330 aa).

A mitochondrion-targeting transit peptide spans 1 to 49 (MASSTPKTLMDFFQPAKRLKASPSSSSFPAVSVAGGSRDLGSVANSPPR). The active-site Proton acceptor is the Asp-173.

It belongs to the uracil-DNA glycosylase (UDG) superfamily. UNG family.

The protein resides in the mitochondrion. It catalyses the reaction Hydrolyzes single-stranded DNA or mismatched double-stranded DNA and polynucleotides, releasing free uracil.. With respect to regulation, inhidited by the small peptide uracil-DNA-glycosylase inhibitor (Ugi). In terms of biological role, excises uracil residues from the DNA which can arise as a result of misincorporation of dUMP residues by DNA polymerase or due to deamination of cytosine. More active on U:G, U:T and U:C mispairs than on U:A pairs. Highly specific for uracil and no activity with 5-substituted uracil or cytosine derivatives. Required for initiation of base excision repair (BER) of uracil. This is Uracil-DNA glycosylase, mitochondrial from Arabidopsis thaliana (Mouse-ear cress).